The following is a 247-amino-acid chain: Ubiquinone biosynthesis O-methyltransferase (247 aa).

Residues R41, G72, D93, and M136 each contribute to the S-adenosyl-L-methionine site.

This sequence belongs to the methyltransferase superfamily. UbiG/COQ3 family.

It catalyses the reaction a 3-demethylubiquinol + S-adenosyl-L-methionine = a ubiquinol + S-adenosyl-L-homocysteine + H(+). The catalysed reaction is a 3-(all-trans-polyprenyl)benzene-1,2-diol + S-adenosyl-L-methionine = a 2-methoxy-6-(all-trans-polyprenyl)phenol + S-adenosyl-L-homocysteine + H(+). The protein operates within cofactor biosynthesis; ubiquinone biosynthesis. In terms of biological role, O-methyltransferase that catalyzes the 2 O-methylation steps in the ubiquinone biosynthetic pathway. The sequence is that of Ubiquinone biosynthesis O-methyltransferase from Bartonella quintana (strain Toulouse) (Rochalimaea quintana).